The chain runs to 293 residues: N-acetylmannosamine kinase (293 aa).

Residues 5–12 and 133–140 each bind ATP; these read AIDIGGTK and GVGGGLVI. Zn(2+) is bound by residues His-157, Cys-167, Cys-169, and Cys-174.

It belongs to the ROK (NagC/XylR) family. NanK subfamily. As to quaternary structure, homodimer.

The catalysed reaction is an N-acyl-D-mannosamine + ATP = an N-acyl-D-mannosamine 6-phosphate + ADP + H(+). It participates in amino-sugar metabolism; N-acetylneuraminate degradation; D-fructose 6-phosphate from N-acetylneuraminate: step 2/5. Its function is as follows. Catalyzes the phosphorylation of N-acetylmannosamine (ManNAc) to ManNAc-6-P. The sequence is that of N-acetylmannosamine kinase from Vibrio vulnificus (strain CMCP6).